The sequence spans 523 residues: NAD(P)H-quinone oxidoreductase subunit 2 (523 aa).

Helical transmembrane passes span 29–49, 57–77, 94–114, 128–148, 182–202, 223–243, 255–275, 291–311, 317–337, 345–365, 389–409, 424–444, and 477–497; these read AVAPEGAVLLAMLATLLVDLA, WVPPICYAGLGTALLLLALQW, LAIAFRAVVALSTLLSLMISW, AGILLAATLGGMLLCGATDLV, LLVGSAAAAVFLYGSSLLYGL, AALALVFVLATVAFKIAAVPF, PTPVVAFLSVGSKAAGFALAL, LLFTVLAVLSMTLGNVVALAQ, MLAYSSIGQAGFVMIGLVCGT, VLYTAAYLFMNLGAFACIILF, LGLSLCLLSLGGIPPMLGFFG, VLVVVGLITSVISIYYYIGVI, and VALVTCVVVTAVGGILSNPLF.

It belongs to the complex I subunit 2 family. NDH-1 can be composed of about 15 different subunits; different subcomplexes with different compositions have been identified which probably have different functions.

The protein localises to the cellular thylakoid membrane. It carries out the reaction a plastoquinone + NADH + (n+1) H(+)(in) = a plastoquinol + NAD(+) + n H(+)(out). The enzyme catalyses a plastoquinone + NADPH + (n+1) H(+)(in) = a plastoquinol + NADP(+) + n H(+)(out). NDH-1 shuttles electrons from an unknown electron donor, via FMN and iron-sulfur (Fe-S) centers, to quinones in the respiratory and/or the photosynthetic chain. The immediate electron acceptor for the enzyme in this species is believed to be plastoquinone. Couples the redox reaction to proton translocation, and thus conserves the redox energy in a proton gradient. Cyanobacterial NDH-1 also plays a role in inorganic carbon-concentration. This Synechococcus sp. (strain WH7803) protein is NAD(P)H-quinone oxidoreductase subunit 2.